We begin with the raw amino-acid sequence, 623 residues long: MPAVYGARLTTFEDSEKESEYGYVRKVSGPVVVADGMAGAAMYELVRVGRDNLIGEIIRLEGDSATIQVYEETAGLMVNDPVLRTHKPLSVELGPGILGNIFDGIQRPLKTIAKRSGDVYIPRGVSVPALDKDTLWEFQPKKIGEGDLLTGGDLYATVFENTLMQHHIALPPDAMGKITYIAPPGQYSITDTVLELEFQGVKKKFTMLQTWPVRTPRPVASKLAADTPLLTGQRVLDALFPSVLGGTCAIPGAFGCGKTVISQALSKYSNSDAVVYVGCGERGNEMAEVLMDFPQLTMTLPDGREESVMKRTTLVANTSNMPVAAREASIYTGITLAEYFRDMGYNVSMMADSTSRWAEALREISGRLAEMPADSGYPAYLAARLASFYERPGKVKCLGGPERTGSVTIVGAVSPPGGDFSDPVTSATLSIVQVFWGLDKKLAQRKHFPSVNWLISYSKYSTALESFYEQFDPDFINIRTKAREVLQREDDLNEIVQLVGKDALAEGDKITLETAKLLREDYLAQNAFTPYDKFCPFYKSVWMMRNIIHFYNLANQAVERGAGSDGQKITYSLIKHRVGDLFYRLVSQKFEDPAEGEAALVGQFQKLHEDLSTGFRNLEDETR.

ATP is bound at residue glycine 252 to threonine 259.

Belongs to the ATPase alpha/beta chains family. V-ATPase is a heteromultimeric enzyme composed of a peripheral catalytic V1 complex (main components: subunits A, B, C, D, E, and F) attached to an integral membrane V0 proton pore complex (main component: the proteolipid protein).

It catalyses the reaction ATP + H2O + 4 H(+)(in) = ADP + phosphate + 5 H(+)(out). Functionally, catalytic subunit of the peripheral V1 complex of vacuolar ATPase. V-ATPase vacuolar ATPase is responsible for acidifying a variety of intracellular compartments in eukaryotic cells. In Vigna radiata var. radiata (Mung bean), this protein is V-type proton ATPase catalytic subunit A.